The primary structure comprises 350 residues: Dihydroorotate dehydrogenase (quinone) (350 aa).

FMN contacts are provided by residues 61–65 and T85; that span reads AGLDK. K65 lines the substrate pocket. Residue 110-114 participates in substrate binding; the sequence is NRMGF. Residues N139 and N172 each contribute to the FMN site. N172 serves as a coordination point for substrate. The active-site Nucleophile is S175. A substrate-binding site is contributed by N177. FMN-binding residues include K217 and T245. 246–247 contacts substrate; sequence NT. FMN-binding positions include G268, G297, and 318 to 319; that span reads YS.

It belongs to the dihydroorotate dehydrogenase family. Type 2 subfamily. Monomer. The cofactor is FMN.

The protein resides in the cell membrane. It catalyses the reaction (S)-dihydroorotate + a quinone = orotate + a quinol. The protein operates within pyrimidine metabolism; UMP biosynthesis via de novo pathway; orotate from (S)-dihydroorotate (quinone route): step 1/1. Catalyzes the conversion of dihydroorotate to orotate with quinone as electron acceptor. This chain is Dihydroorotate dehydrogenase (quinone), found in Flavobacterium lutescens.